The following is a 740-amino-acid chain: Phosphoribosylformylglycinamidine synthase subunit PurL (740 aa).

Histidine 50 is an active-site residue. Residues tyrosine 53 and lysine 92 each coordinate ATP. Glutamate 94 is a binding site for Mg(2+). Residues 95 to 98 and arginine 117 contribute to the substrate site; that span reads SHNH. The Proton acceptor role is filled by histidine 96. Aspartate 118 lines the Mg(2+) pocket. Glutamine 241 contributes to the substrate binding site. Aspartate 269 contacts Mg(2+). 313–315 serves as a coordination point for substrate; it reads ESQ. ATP contacts are provided by aspartate 495 and glycine 532. Mg(2+) is bound at residue asparagine 533. Serine 535 provides a ligand contact to substrate.

This sequence belongs to the FGAMS family. As to quaternary structure, monomer. Part of the FGAM synthase complex composed of 1 PurL, 1 PurQ and 2 PurS subunits.

Its subcellular location is the cytoplasm. The enzyme catalyses N(2)-formyl-N(1)-(5-phospho-beta-D-ribosyl)glycinamide + L-glutamine + ATP + H2O = 2-formamido-N(1)-(5-O-phospho-beta-D-ribosyl)acetamidine + L-glutamate + ADP + phosphate + H(+). The protein operates within purine metabolism; IMP biosynthesis via de novo pathway; 5-amino-1-(5-phospho-D-ribosyl)imidazole from N(2)-formyl-N(1)-(5-phospho-D-ribosyl)glycinamide: step 1/2. Its function is as follows. Part of the phosphoribosylformylglycinamidine synthase complex involved in the purines biosynthetic pathway. Catalyzes the ATP-dependent conversion of formylglycinamide ribonucleotide (FGAR) and glutamine to yield formylglycinamidine ribonucleotide (FGAM) and glutamate. The FGAM synthase complex is composed of three subunits. PurQ produces an ammonia molecule by converting glutamine to glutamate. PurL transfers the ammonia molecule to FGAR to form FGAM in an ATP-dependent manner. PurS interacts with PurQ and PurL and is thought to assist in the transfer of the ammonia molecule from PurQ to PurL. This is Phosphoribosylformylglycinamidine synthase subunit PurL from Brucella abortus (strain S19).